A 103-amino-acid polypeptide reads, in one-letter code: Cytochrome c-552 (103 aa).

Residues 1–22 (MKTAWLGTFAASALLVAGYAQA) form the signal peptide. The heme c site is built by Cys-32, Cys-35, His-36, and Met-81.

As to quaternary structure, monomer. Binds 1 heme c group covalently per subunit.

The protein localises to the periplasm. Functionally, monoheme c-type cytochrome. Probable electron donor to membrane cytochrome oxidase and to periplasmic nitrite reductase. In Nitrosomonas europaea (strain ATCC 19718 / CIP 103999 / KCTC 2705 / NBRC 14298), this protein is Cytochrome c-552 (cyt).